The following is a 196-amino-acid chain: Imidazole glycerol phosphate synthase subunit HisH (196 aa).

In terms of domain architecture, Glutamine amidotransferase type-1 spans 2-196 (NVVILDTGCA…AKLLKNFLEM (195 aa)). The Nucleophile role is filled by cysteine 77. Catalysis depends on residues histidine 178 and glutamate 180.

As to quaternary structure, heterodimer of HisH and HisF.

It is found in the cytoplasm. The enzyme catalyses 5-[(5-phospho-1-deoxy-D-ribulos-1-ylimino)methylamino]-1-(5-phospho-beta-D-ribosyl)imidazole-4-carboxamide + L-glutamine = D-erythro-1-(imidazol-4-yl)glycerol 3-phosphate + 5-amino-1-(5-phospho-beta-D-ribosyl)imidazole-4-carboxamide + L-glutamate + H(+). It catalyses the reaction L-glutamine + H2O = L-glutamate + NH4(+). It functions in the pathway amino-acid biosynthesis; L-histidine biosynthesis; L-histidine from 5-phospho-alpha-D-ribose 1-diphosphate: step 5/9. In terms of biological role, IGPS catalyzes the conversion of PRFAR and glutamine to IGP, AICAR and glutamate. The HisH subunit catalyzes the hydrolysis of glutamine to glutamate and ammonia as part of the synthesis of IGP and AICAR. The resulting ammonia molecule is channeled to the active site of HisF. The sequence is that of Imidazole glycerol phosphate synthase subunit HisH from Shigella flexneri.